A 239-amino-acid polypeptide reads, in one-letter code: Flagellin B3 (239 aa).

Residues 1 to 11 (MLKNFMKNKKG) constitute a propeptide that is removed on maturation. Residues Asn115 and Asn128 are each glycosylated (N-linked (GlcNAc...) asparagine).

Belongs to the archaeal flagellin family. In terms of processing, N-linked glycans consist of the 779 Da trisaccharide beta-ManNAc(Thr)-(1-4)-beta-GlcNAc3NAcA-(1-3)-beta-GlcNAc.

It localises to the archaeal flagellum. Functionally, flagellin is the subunit protein which polymerizes to form the filaments of archaeal flagella. The polypeptide is Flagellin B3 (flaB3) (Methanococcus voltae).